The following is a 445-amino-acid chain: tRNA-2-methylthio-N(6)-dimethylallyladenosine synthase (445 aa).

Residues 13–129 (KKLFIKTYGC…LPAMARAGRG (117 aa)) enclose the MTTase N-terminal domain. [4Fe-4S] cluster contacts are provided by cysteine 22, cysteine 58, cysteine 92, cysteine 163, cysteine 167, and cysteine 170. A Radical SAM core domain is found at 149 to 383 (TRRAPAAFLT…LTSQQKAAQE (235 aa)). The 63-residue stretch at 383 to 445 (EGMVGRELGV…PNSLAGVLAA (63 aa)) folds into the TRAM domain.

The protein belongs to the methylthiotransferase family. MiaB subfamily. In terms of assembly, monomer. It depends on [4Fe-4S] cluster as a cofactor.

Its subcellular location is the cytoplasm. The catalysed reaction is N(6)-dimethylallyladenosine(37) in tRNA + (sulfur carrier)-SH + AH2 + 2 S-adenosyl-L-methionine = 2-methylsulfanyl-N(6)-dimethylallyladenosine(37) in tRNA + (sulfur carrier)-H + 5'-deoxyadenosine + L-methionine + A + S-adenosyl-L-homocysteine + 2 H(+). In terms of biological role, catalyzes the methylthiolation of N6-(dimethylallyl)adenosine (i(6)A), leading to the formation of 2-methylthio-N6-(dimethylallyl)adenosine (ms(2)i(6)A) at position 37 in tRNAs that read codons beginning with uridine. This is tRNA-2-methylthio-N(6)-dimethylallyladenosine synthase from Paracoccus denitrificans (strain Pd 1222).